The following is a 263-amino-acid chain: Putative replication protein PDa0002 (263 aa).

This Xylella fastidiosa (strain Temecula1 / ATCC 700964) protein is Putative replication protein PDa0002.